We begin with the raw amino-acid sequence, 297 residues long: Light-independent protochlorophyllide reductase iron-sulfur ATP-binding protein (297 aa).

ATP contacts are provided by residues 41 to 46 and K70; that span reads GIGKST. S45 is a binding site for Mg(2+). C126 and C160 together coordinate [4Fe-4S] cluster. ATP-binding positions include 211-212 and 235-237; these read NR and PDL.

It belongs to the NifH/BchL/ChlL family. In terms of assembly, homodimer. Protochlorophyllide reductase is composed of three subunits; BchL, BchN and BchB. The cofactor is [4Fe-4S] cluster.

It carries out the reaction chlorophyllide a + oxidized 2[4Fe-4S]-[ferredoxin] + 2 ADP + 2 phosphate = protochlorophyllide a + reduced 2[4Fe-4S]-[ferredoxin] + 2 ATP + 2 H2O. It participates in porphyrin-containing compound metabolism; bacteriochlorophyll biosynthesis (light-independent). Component of the dark-operative protochlorophyllide reductase (DPOR) that uses Mg-ATP and reduced ferredoxin to reduce ring D of protochlorophyllide (Pchlide) to form chlorophyllide a (Chlide). This reaction is light-independent. The L component serves as a unique electron donor to the NB-component of the complex, and binds Mg-ATP. This is Light-independent protochlorophyllide reductase iron-sulfur ATP-binding protein from Methylobacterium radiotolerans (strain ATCC 27329 / DSM 1819 / JCM 2831 / NBRC 15690 / NCIMB 10815 / 0-1).